The following is a 235-amino-acid chain: Peptidase E (235 aa).

Catalysis depends on charge relay system residues serine 122, aspartate 137, and histidine 159.

This sequence belongs to the peptidase S51 family.

Its subcellular location is the cytoplasm. It carries out the reaction Dipeptidase E catalyzes the hydrolysis of dipeptides Asp-|-Xaa. It does not act on peptides with N-terminal Glu, Asn or Gln, nor does it cleave isoaspartyl peptides.. In terms of biological role, hydrolyzes dipeptides containing N-terminal aspartate residues. May play a role in allowing the cell to use peptide aspartate to spare carbon otherwise required for the synthesis of the aspartate family of amino acids. This chain is Peptidase E, found in Shewanella amazonensis (strain ATCC BAA-1098 / SB2B).